Here is a 951-residue protein sequence, read N- to C-terminus: Coiled-coil and C2 domain-containing protein 1A (951 aa).

Disordered regions lie at residues 80–139, 185–266, 306–346, and 437–491; these read CMRD…LETT, AIDE…RQRD, VDLS…PPPR, and NQDE…TRAQ. A compositionally biased stretch (acidic residues) spans 84–104; it reads PDEDEEEGTDEDDLEADDDLL. 3 positions are modified to phosphothreonine: Thr92, Thr204, and Thr206. Low complexity predominate over residues 201–210; sequence PASTPTYSPA. Phosphoserine; by CDK1 is present on Ser208. 2 positions are modified to phosphoserine: Ser253 and Ser324. Residues 311–333 show a composition bias toward pro residues; that stretch reads LPPPPDQLPPDPPSPPSQPPTPA. Positions 346 to 392 form a coiled coil; it reads RTLLEALEQRMERYQVAAAQAKSKGDQRKARMHERIVKQYQDAIRAH. Ser455 is modified (phosphoserine). Low complexity predominate over residues 475–488; that stretch reads SAPTAKAPPKATST. The stretch at 484–517 forms a coiled coil; that stretch reads KATSTRAQQQLAFLEGRKKQLLQAALRAKQKNDV. The region spanning 637–771 is the C2 domain; sequence RFEQRTFSVI…EIACEVREIL (135 aa). Residues 818–841 form a disordered region; that stretch reads TQVAGPKGKAPPVPAPARESGNRS.

Belongs to the CC2D1 family. Phosphorylation on Ser-208 by CDK1 promotes spindle pole localization and association with SCC1/RAD21.

Its subcellular location is the cytoplasm. The protein resides in the nucleus. The protein localises to the cytoskeleton. It localises to the microtubule organizing center. It is found in the centrosome. Its function is as follows. Transcription factor that binds specifically to the DRE (dual repressor element) and represses HTR1A gene transcription in neuronal cells. The combination of calcium and ATP specifically inactivates the binding with FRE. May play a role in the altered regulation of HTR1A associated with anxiety and major depression. Mediates HDAC-independent repression of HTR1A promoter in neuronal cell. Performs essential function in controlling functional maturation of synapses. Plays distinct roles depending on its localization. When cytoplasmic, acts as a scaffold protein in the PI3K/PDK1/AKT pathway. Repressor of HTR1A when nuclear. In the centrosome, regulates spindle pole localization of the cohesin subunit SCC1/RAD21, thereby mediating centriole cohesion during mitosis. This Homo sapiens (Human) protein is Coiled-coil and C2 domain-containing protein 1A (CC2D1A).